The primary structure comprises 395 residues: Zinc finger protein 385D (395 aa).

3 consecutive Matrin-type zinc fingers follow at residues Ile-80–Ala-110, Leu-204–Ala-234, and Phe-267–Gly-297. Positions Leu-282–Asn-308 are disordered.

The protein resides in the nucleus. The sequence is that of Zinc finger protein 385D (Znf385d) from Rattus norvegicus (Rat).